The sequence spans 506 residues: MINSFSLFAHITPIIRSSLHSRYSVISSRKAMSSLAAAPYRHVMMPFSPAQDAQVHGNSALTKLTDAIPDLKIYTRSSPHYESLRGVYNKLITAQPLAICRPTSVAQVQAIVKTVSGLGIPLGVRGGGHDVFGRGCIADSVTIDMRELDTQELSQDKKTVKVGGGITSKNLVGFLGSHNLCTSNGFAGEAGWTSWASWGGYGPLGDYVGLGVDNIVGAKIVTASGDVVDAKGDSELLWALRGGGGNFGVIAETDVRVYPMSTIQAGFIVYPWPETADVLLRLQALLDSGVPDKLCLQAGFTKGEWGLGMAITYIWPEAETIGPESEEWLQKLKGLGTCIVDTVAETTFEAFQASISSAISNPVNVTSRHISISKFTSDTLNQLIGACESMPAEADCSITCTILHGKAAQANVLSAFGTRRPHIMLHINAVTEEAAHEHVAIAWADRLVDGVEATGDSIGSTYVSFMESDKDPKGCYGENWERLKAVKKEVDPNDVFRFVHGRIPAA.

The region spanning 92 to 260 (ITAQPLAICR…AETDVRVYPM (169 aa)) is the FAD-binding PCMH-type domain.

This sequence belongs to the oxygen-dependent FAD-linked oxidoreductase family. In terms of assembly, might be part of an extracellular enzyme complex composed of GIP1, aurF, aurO and aurS. The cofactor is FAD.

The protein localises to the secreted. It localises to the extracellular space. It participates in pigment biosynthesis. In terms of biological role, FAD-linked oxidoreductase; part of the gene cluster that mediates the biosynthesis of aurofusarin, a red mycelium pigment which is acting as a mycotoxin. The first step is performed by the polyketide synthase which condenses one acetyl-CoA and 6 malonyl-CoA units to form the first intermediate, the cyclic heptaketide and yellow pigment YWA1. The C2 hydroxyl group in the pyrone ring of YWA1 is probably formed during ring closure by an aldol-type cyclization reaction. The dehydratase aurZ then acts as the first tailoring enzyme in the aurofusarin biosynthetic pathway by converting YWA1 to nor-rubrofusarin. Nor-rubrofusarin is then methylated to rubrofusarin by the O-methyltransferase aurJ. Rubrofusarin is then transported across the plasma membrane by the rubrofusarin-specific pump aurT for further enzymatic processing by the extracellular complex composed of GIP1, aurF, aurO and aurS to yield aurofusarin. This is FAD-linked oxidoreductase aurO from Gibberella zeae (strain ATCC MYA-4620 / CBS 123657 / FGSC 9075 / NRRL 31084 / PH-1) (Wheat head blight fungus).